Consider the following 298-residue polypeptide: Bifunctional protein FolD (298 aa).

NADP(+) contacts are provided by residues Gly165–Ser167, Ser190, and Ile231.

Belongs to the tetrahydrofolate dehydrogenase/cyclohydrolase family. As to quaternary structure, homodimer.

The enzyme catalyses (6R)-5,10-methylene-5,6,7,8-tetrahydrofolate + NADP(+) = (6R)-5,10-methenyltetrahydrofolate + NADPH. The catalysed reaction is (6R)-5,10-methenyltetrahydrofolate + H2O = (6R)-10-formyltetrahydrofolate + H(+). It participates in one-carbon metabolism; tetrahydrofolate interconversion. Functionally, catalyzes the oxidation of 5,10-methylenetetrahydrofolate to 5,10-methenyltetrahydrofolate and then the hydrolysis of 5,10-methenyltetrahydrofolate to 10-formyltetrahydrofolate. The sequence is that of Bifunctional protein FolD from Prochlorococcus marinus (strain MIT 9515).